Reading from the N-terminus, the 162-residue chain is Crossover junction endodeoxyribonuclease RuvC (162 aa).

Catalysis depends on residues Asp-8, Glu-69, and His-141. Mg(2+) is bound by residues Asp-8, Glu-69, and His-141.

It belongs to the RuvC family. In terms of assembly, homodimer which binds Holliday junction (HJ) DNA. The HJ becomes 2-fold symmetrical on binding to RuvC with unstacked arms; it has a different conformation from HJ DNA in complex with RuvA. In the full resolvosome a probable DNA-RuvA(4)-RuvB(12)-RuvC(2) complex forms which resolves the HJ. Mg(2+) is required as a cofactor.

It localises to the cytoplasm. The enzyme catalyses Endonucleolytic cleavage at a junction such as a reciprocal single-stranded crossover between two homologous DNA duplexes (Holliday junction).. In terms of biological role, the RuvA-RuvB-RuvC complex processes Holliday junction (HJ) DNA during genetic recombination and DNA repair. Endonuclease that resolves HJ intermediates. Cleaves cruciform DNA by making single-stranded nicks across the HJ at symmetrical positions within the homologous arms, yielding a 5'-phosphate and a 3'-hydroxyl group; requires a central core of homology in the junction. The consensus cleavage sequence is 5'-(A/T)TT(C/G)-3'. Cleavage occurs on the 3'-side of the TT dinucleotide at the point of strand exchange. HJ branch migration catalyzed by RuvA-RuvB allows RuvC to scan DNA until it finds its consensus sequence, where it cleaves and resolves the cruciform DNA. In Wolbachia sp. subsp. Brugia malayi (strain TRS), this protein is Crossover junction endodeoxyribonuclease RuvC.